The sequence spans 552 residues: Dihydroxy-acid dehydratase (552 aa).

Asp78 contacts Mg(2+). Cys119 contributes to the [2Fe-2S] cluster binding site. Positions 120 and 121 each coordinate Mg(2+). At Lys121 the chain carries N6-carboxylysine. Cys191 provides a ligand contact to [2Fe-2S] cluster. Glu442 is a Mg(2+) binding site. Ser468 serves as the catalytic Proton acceptor.

Belongs to the IlvD/Edd family. Homodimer. It depends on [2Fe-2S] cluster as a cofactor. The cofactor is Mg(2+).

It catalyses the reaction (2R)-2,3-dihydroxy-3-methylbutanoate = 3-methyl-2-oxobutanoate + H2O. It carries out the reaction (2R,3R)-2,3-dihydroxy-3-methylpentanoate = (S)-3-methyl-2-oxopentanoate + H2O. The protein operates within amino-acid biosynthesis; L-isoleucine biosynthesis; L-isoleucine from 2-oxobutanoate: step 3/4. It participates in amino-acid biosynthesis; L-valine biosynthesis; L-valine from pyruvate: step 3/4. Functionally, functions in the biosynthesis of branched-chain amino acids. Catalyzes the dehydration of (2R,3R)-2,3-dihydroxy-3-methylpentanoate (2,3-dihydroxy-3-methylvalerate) into 2-oxo-3-methylpentanoate (2-oxo-3-methylvalerate) and of (2R)-2,3-dihydroxy-3-methylbutanoate (2,3-dihydroxyisovalerate) into 2-oxo-3-methylbutanoate (2-oxoisovalerate), the penultimate precursor to L-isoleucine and L-valine, respectively. The polypeptide is Dihydroxy-acid dehydratase (Caldicellulosiruptor bescii (strain ATCC BAA-1888 / DSM 6725 / KCTC 15123 / Z-1320) (Anaerocellum thermophilum)).